The sequence spans 858 residues: MASERPREPDGEDSIKLSADVKPFVPKFAGLNVAWSESSETRVFPGCAATYYPFVQEPPAAEQKMYPEDMAFGAPTFPAQYVSSEIALHPFAYPTYTLESAQSVCSVPTLQYDYSQARCHPGFRTAKPRHEHVCPPPQEAKGVFKKKPSDERRACEEQKSSSRRADNAVPCEARPARGSSHLSSRTESSLKSDGYHKRPDRKSRILAKSASTSKPEFEFSRLDFPELQSPKNSNMPETQKPPRWGPLGPAASNMPLLGDVGKPVADMVEGKMVKSDHTDGAVTSNATTSSPSCTQELSWTPMGYIVRQTVSSDSAAATENVTSMINLKKTTSSADAKNVSVTSEALSSNPSYNREKRVYPAPKAKASQGGELEQNESSKKNKKKKEKSKPSYEVLTVQEPPRIEDAEEFPNLSVASERRHRGQSPKLHSKQQTQNEFKTSGKKSQVPVQLDLGGMLAALEKQQQQQHASHAKPSSRPVVFSVGAVPVLSKDASSSERGRRSSQMKTPHNPLDSSAPLMKKGKQREIPKAKKPTSLKKIILKERQERMQQRLQESAVSLTVASDDSQDVESGASNQTPSQDNPTGPEKTEESVSSTPVVEGESEEPAGTEFQRDPEACQPAPDSATFPKIHSRRFRDYCSQMLSKEVDACVTGLLKELVRFQDRMYQKDPVKAKTKRRLVLGLREVLKHLKLRKLKCIIISPNCEKTQSKGGLDDTLHTIIDCACEQNIPFVFALNRKALGRSLNKAVPVSIVGIFSYDGAQDQFHKMVELTMAARQAYKTMLETMRQEQAGEPGPQSPPSPPMQDPIPSTEEGTLPSTGEEPHYIEIWKKHLEAYSQRALELEDSLEASTSQMMNLNL.

3 disordered regions span residues 127-261, 275-296, and 327-625; these read KPRH…GDVG, SDHT…CTQE, and LKKT…DSAT. Basic and acidic residues-rich tracts occupy residues 147–166, 188–197, and 215–224; these read KPSD…RRAD, SSLKSDGYHK, and PEFEFSRLDF. 2 stretches are compositionally biased toward polar residues: residues 281–296 and 327–352; these read AVTS…CTQE and LKKT…NPSY. Positions 380–387 match the Nuclear localization signal motif; the sequence is KNKKKKEK. Over residues 418–429 the composition is skewed to basic residues; that stretch reads RRHRGQSPKLHS. The span at 430–447 shows a compositional bias: polar residues; sequence KQQTQNEFKTSGKKSQVP. Residues 539-548 are compositionally biased toward basic and acidic residues; sequence ILKERQERMQ. Composition is skewed to polar residues over residues 554–563 and 571–582; these read SAVSLTVASD and GASNQTPSQDNP. The segment at 678-699 is RNA-binding; that stretch reads LVLGLREVLKHLKLRKLKCIII. The disordered stretch occupies residues 785–819; that stretch reads MRQEQAGEPGPQSPPSPPMQDPIPSTEEGTLPSTG. Residues 795–805 are compositionally biased toward pro residues; that stretch reads PQSPPSPPMQD.

Its subcellular location is the cytoplasm. It is found in the nucleus. In terms of biological role, mRNA-binding protein that binds to the SECIS (selenocysteine insertion sequence) element present in the 3'-UTR of mRNAs encoding selenoproteins and facilitates the incorporation of the rare amino acid selenocysteine. Insertion of selenocysteine at UGA codons is mediated by SECISBP2 and EEFSEC: SECISBP2 (1) specifically binds the SECIS sequence once the 80S ribosome encounters an in-frame UGA codon and (2) contacts the RPS27A/eS31 of the 40S ribosome before ribosome stalling. (3) GTP-bound EEFSEC then delivers selenocysteinyl-tRNA(Sec) to the 80S ribosome and adopts a preaccommodated state conformation. (4) After GTP hydrolysis, EEFSEC dissociates from the assembly, selenocysteinyl-tRNA(Sec) accommodates, and peptide bond synthesis and selenoprotein elongation occur. This is Selenocysteine insertion sequence-binding protein 2 from Mus musculus (Mouse).